Consider the following 291-residue polypeptide: Probable protein S-acyltransferase 12 (291 aa).

2 helical membrane-spanning segments follow: residues 14–34 and 49–69; these read GYFMILLVVAVVGVSYYAVVV and LSALAALIIFVFHFLLIMLLW. Positions 111–161 constitute a DHHC domain; it reads GYCTKCRNVKPPRCHHCSVCQRCVLKMDHHCVWIVNCVGARNYKFFLLFLF. Cysteine 141 (S-palmitoyl cysteine intermediate) is an active-site residue. 2 consecutive transmembrane segments (helical) span residues 155 to 175 and 198 to 218; these read FFLLFLFYTFLETMLDVIVLL and LVLAFVLNFAFVLSLLCFVVM.

The protein belongs to the DHHC palmitoyltransferase family.

Its subcellular location is the cell membrane. It carries out the reaction L-cysteinyl-[protein] + hexadecanoyl-CoA = S-hexadecanoyl-L-cysteinyl-[protein] + CoA. Functionally, palmitoyl acyltransferase. This Arabidopsis thaliana (Mouse-ear cress) protein is Probable protein S-acyltransferase 12 (PAT12).